A 418-amino-acid chain; its full sequence is Serine hydroxymethyltransferase (418 aa).

(6S)-5,6,7,8-tetrahydrofolate-binding positions include Leu-121 and 125-127; that span reads GHL. N6-(pyridoxal phosphate)lysine is present on Lys-230. 356–358 lines the (6S)-5,6,7,8-tetrahydrofolate pocket; the sequence is SPF.

This sequence belongs to the SHMT family. As to quaternary structure, homodimer. Pyridoxal 5'-phosphate serves as cofactor.

Its subcellular location is the cytoplasm. It carries out the reaction (6R)-5,10-methylene-5,6,7,8-tetrahydrofolate + glycine + H2O = (6S)-5,6,7,8-tetrahydrofolate + L-serine. It functions in the pathway one-carbon metabolism; tetrahydrofolate interconversion. Its pathway is amino-acid biosynthesis; glycine biosynthesis; glycine from L-serine: step 1/1. Catalyzes the reversible interconversion of serine and glycine with tetrahydrofolate (THF) serving as the one-carbon carrier. This reaction serves as the major source of one-carbon groups required for the biosynthesis of purines, thymidylate, methionine, and other important biomolecules. Also exhibits THF-independent aldolase activity toward beta-hydroxyamino acids, producing glycine and aldehydes, via a retro-aldol mechanism. The protein is Serine hydroxymethyltransferase of Shewanella sediminis (strain HAW-EB3).